The sequence spans 281 residues: Acetyl-coenzyme A carboxylase carboxyl transferase subunit beta (281 aa).

Positions 24 to 281 (GLWYKSPKGK…TKLLTMLANN (258 aa)) constitute a CoA carboxyltransferase N-terminal domain.

Belongs to the AccD/PCCB family. As to quaternary structure, acetyl-CoA carboxylase is a heterohexamer composed of biotin carboxyl carrier protein (AccB), biotin carboxylase (AccC) and two subunits each of ACCase subunit alpha (AccA) and ACCase subunit beta (AccD).

Its subcellular location is the cytoplasm. It carries out the reaction N(6)-carboxybiotinyl-L-lysyl-[protein] + acetyl-CoA = N(6)-biotinyl-L-lysyl-[protein] + malonyl-CoA. Its pathway is lipid metabolism; malonyl-CoA biosynthesis; malonyl-CoA from acetyl-CoA: step 1/1. Functionally, component of the acetyl coenzyme A carboxylase (ACC) complex. Biotin carboxylase (BC) catalyzes the carboxylation of biotin on its carrier protein (BCCP) and then the CO(2) group is transferred by the transcarboxylase to acetyl-CoA to form malonyl-CoA. This is Acetyl-coenzyme A carboxylase carboxyl transferase subunit beta from Amoebophilus asiaticus (strain 5a2).